Reading from the N-terminus, the 104-residue chain is uncharacterized protein (104 aa).

The first 23 residues, 1 to 23, serve as a signal peptide directing secretion; that stretch reads MDIHDYVELIALAFWVISVVSVG.

This is an uncharacterized protein from Lactobacillus helveticus (Lactobacillus suntoryeus).